Reading from the N-terminus, the 45-residue chain is Large ribosomal subunit protein bL34 (45 aa).

It belongs to the bacterial ribosomal protein bL34 family.

The polypeptide is Large ribosomal subunit protein bL34 (Acidothermus cellulolyticus (strain ATCC 43068 / DSM 8971 / 11B)).